A 399-amino-acid chain; its full sequence is Succinate--CoA ligase [ADP-forming] subunit beta (399 aa).

An ATP-grasp domain is found at 9–254 (KAVLAEFGAP…ESEEDPKEIE (246 aa)). ATP-binding positions include lysine 46, 53–55 (GRG), glutamate 109, alanine 112, and glutamate 117. Mg(2+) contacts are provided by asparagine 209 and aspartate 223. Substrate-binding positions include asparagine 274 and 331–333 (GIM).

The protein belongs to the succinate/malate CoA ligase beta subunit family. As to quaternary structure, heterotetramer of two alpha and two beta subunits. Mg(2+) is required as a cofactor.

The catalysed reaction is succinate + ATP + CoA = succinyl-CoA + ADP + phosphate. It carries out the reaction GTP + succinate + CoA = succinyl-CoA + GDP + phosphate. The protein operates within carbohydrate metabolism; tricarboxylic acid cycle; succinate from succinyl-CoA (ligase route): step 1/1. Functionally, succinyl-CoA synthetase functions in the citric acid cycle (TCA), coupling the hydrolysis of succinyl-CoA to the synthesis of either ATP or GTP and thus represents the only step of substrate-level phosphorylation in the TCA. The beta subunit provides nucleotide specificity of the enzyme and binds the substrate succinate, while the binding sites for coenzyme A and phosphate are found in the alpha subunit. This Caulobacter sp. (strain K31) protein is Succinate--CoA ligase [ADP-forming] subunit beta.